Consider the following 407-residue polypeptide: Immunoglobulin superfamily member 5 (407 aa).

Topologically, residues 1–266 (MGQKERSTAD…LGFSLPTWGK (266 aa)) are extracellular. Ig-like V-type domains follow at residues 39–139 (NEVI…LTVQ) and 142–231 (GELF…ATVN). N-linked (GlcNAc...) asparagine glycans are attached at residues N59, N103, N210, and N231. 2 cysteine pairs are disulfide-bonded: C60–C123 and C163–C215. A helical membrane pass occupies residues 267–285 (VGLGLAGTMLLTPTCTLTI). The Cytoplasmic segment spans residues 286-407 (RCCCCRRRCC…PEKVSNTTVV (122 aa)). Over residues 320–331 (KSEKEKTNKETE) the composition is skewed to basic and acidic residues. A disordered region spans residues 320–407 (KSEKEKTNKE…PEKVSNTTVV (88 aa)). The segment covering 389–407 (PQASFNLASPEKVSNTTVV) has biased composition (polar residues).

Belongs to the immunoglobulin superfamily. As to quaternary structure, interacts with MAGI1 at tight junctions, forms a tripartite complex with NPHS1. Interacts with LNX1 isoform 2 via its PDZ 2 domain, it may also interact with other isoforms containing this domain.

The protein resides in the apical cell membrane. It is found in the cell junction. The protein localises to the tight junction. In terms of biological role, provides, together with MAGI1, an adhesion machinery at tight junctions, which may regulate the permeability of kidney glomerulus and small intestinal epithelial cells. Mediates calcium-independent homophilic cell adhesion. In testis, it may function as a cell adhesion molecule rather than a tight-junction protein. It may participate in the adhesion between spermatogonia-spermatogonia, spermatogonia-Sertoli cells, and Sertoli cells-Sertoli cells. The chain is Immunoglobulin superfamily member 5 (IGSF5) from Homo sapiens (Human).